Here is a 252-residue protein sequence, read N- to C-terminus: Imidazole glycerol phosphate synthase subunit HisF (252 aa).

Active-site residues include aspartate 11 and aspartate 130.

This sequence belongs to the HisA/HisF family. As to quaternary structure, heterodimer of HisH and HisF.

Its subcellular location is the cytoplasm. It catalyses the reaction 5-[(5-phospho-1-deoxy-D-ribulos-1-ylimino)methylamino]-1-(5-phospho-beta-D-ribosyl)imidazole-4-carboxamide + L-glutamine = D-erythro-1-(imidazol-4-yl)glycerol 3-phosphate + 5-amino-1-(5-phospho-beta-D-ribosyl)imidazole-4-carboxamide + L-glutamate + H(+). The protein operates within amino-acid biosynthesis; L-histidine biosynthesis; L-histidine from 5-phospho-alpha-D-ribose 1-diphosphate: step 5/9. Its function is as follows. IGPS catalyzes the conversion of PRFAR and glutamine to IGP, AICAR and glutamate. The HisF subunit catalyzes the cyclization activity that produces IGP and AICAR from PRFAR using the ammonia provided by the HisH subunit. This Azobacteroides pseudotrichonymphae genomovar. CFP2 protein is Imidazole glycerol phosphate synthase subunit HisF.